The chain runs to 210 residues: MSRKHLTARQQEIFDFVKHHIETTGMPPTRVEIAREIGFKSPNAAEEHLKALARKGYIEMLSGTSRGIRILVDNEETAANDDGLPLIGKVAAGTPIMAIEHVESHYPVNGAMFNPNADYLLKVNGNSMEKIGILDGDLLAVHKTNFARNGQVVVARVDDEVTVKRLEKKGDLIYLHPENDELQPIVVDPRIEYIEIEGIAVGVIRNNAWM.

Residues 30 to 50 (RVEIAREIGFKSPNAAEEHLK) constitute a DNA-binding region (H-T-H motif). Catalysis depends on for autocatalytic cleavage activity residues Ser-127 and Lys-164.

It belongs to the peptidase S24 family. In terms of assembly, homodimer.

It carries out the reaction Hydrolysis of Ala-|-Gly bond in repressor LexA.. In terms of biological role, represses a number of genes involved in the response to DNA damage (SOS response), including recA and lexA. In the presence of single-stranded DNA, RecA interacts with LexA causing an autocatalytic cleavage which disrupts the DNA-binding part of LexA, leading to derepression of the SOS regulon and eventually DNA repair. The sequence is that of LexA repressor from Actinobacillus pleuropneumoniae serotype 7 (strain AP76).